Reading from the N-terminus, the 392-residue chain is Phosphoglycerate kinase (392 aa).

Substrate contacts are provided by residues 19 to 21 (DYN), R34, 57 to 60 (HLGR), R116, and R149. Residues K199, E321, and 347 to 350 (GGDS) each bind ATP.

Belongs to the phosphoglycerate kinase family. In terms of assembly, monomer.

It is found in the cytoplasm. It catalyses the reaction (2R)-3-phosphoglycerate + ATP = (2R)-3-phospho-glyceroyl phosphate + ADP. It functions in the pathway carbohydrate degradation; glycolysis; pyruvate from D-glyceraldehyde 3-phosphate: step 2/5. In Thermomicrobium roseum (strain ATCC 27502 / DSM 5159 / P-2), this protein is Phosphoglycerate kinase.